Here is a 344-residue protein sequence, read N- to C-terminus: Arginine N-succinyltransferase (344 aa).

Leu125 contacts succinyl-CoA. The Proton donor role is filled by His229.

It belongs to the arginine N-succinyltransferase family.

It catalyses the reaction succinyl-CoA + L-arginine = N(2)-succinyl-L-arginine + CoA + H(+). It functions in the pathway amino-acid degradation; L-arginine degradation via AST pathway; L-glutamate and succinate from L-arginine: step 1/5. Its function is as follows. Catalyzes the transfer of succinyl-CoA to arginine to produce N(2)-succinylarginine. The protein is Arginine N-succinyltransferase of Salmonella agona (strain SL483).